The following is a 400-amino-acid chain: D(3) dopamine receptor (400 aa).

The Extracellular portion of the chain corresponds to 1–32 (MAPLSQLSGHLNYTCGVENSTGASQARPHAYY). N-linked (GlcNAc...) asparagine glycans are attached at residues asparagine 12 and asparagine 19. Residues 33–55 (ALSYCALILAIVFGNGLVCMAVL) form a helical membrane-spanning segment. At 56 to 65 (KERALQTTTN) the chain is on the cytoplasmic side. Residues 66–88 (YLVVSLAVADLLVATLVMPWVVY) form a helical membrane-spanning segment. Topologically, residues 89–104 (LEVTGGVWNFSRVCCD) are extracellular. Asparagine 97 carries N-linked (GlcNAc...) asparagine glycosylation. Cysteine 103 and cysteine 181 are disulfide-bonded. The helical transmembrane segment at 105–126 (VFVTLDVMMCTASILNLCAISI) threads the bilayer. At 127–149 (DRYTAVVMPVHYQHGTGQSSCRR) the chain is on the cytoplasmic side. Residues 150–170 (VTLMITAVWVLAFAVSCPLLF) traverse the membrane as a helical segment. Topologically, residues 171–187 (GFNTTGDPTVCSISNPD) are extracellular. Asparagine 173 carries an N-linked (GlcNAc...) asparagine glycan. The helical transmembrane segment at 188–209 (FVIYSSVVSFYLPFGVTVLVYA) threads the bilayer. At 210 to 329 (RIYVVLKQRR…VPLREKKATQ (120 aa)) the chain is on the cytoplasmic side. A helical membrane pass occupies residues 330 to 351 (MVAIVLGAFIVCWLPFFLTHVL). The Extracellular segment spans residues 352–366 (NTHCQTCHVSPELYS). Cysteine 355 and cysteine 358 are joined by a disulfide. A helical transmembrane segment spans residues 367–386 (ATTWLGYVNSALNPVIYTTF). At 387–400 (NIEFRKAFLKILSC) the chain is on the cytoplasmic side.

This sequence belongs to the G-protein coupled receptor 1 family. In terms of assembly, interacts with CLIC6. Interacts with GRK4. Interacts with PALM. Interacts with FLNA (via filamin repeat 21); increases PKA-mediated phosphorylation of FLNA. Post-translationally, phosphorylated by GRK4. Palmitoylated.

Its subcellular location is the cell membrane. In terms of biological role, dopamine receptor whose activity is mediated by G proteins which inhibit adenylyl cyclase. Promotes cell proliferation. The polypeptide is D(3) dopamine receptor (DRD3) (Chlorocebus aethiops (Green monkey)).